Here is a 123-residue protein sequence, read N- to C-terminus: Putative trans-acting factor (123 aa).

Disordered stretches follow at residues 1 to 38 and 100 to 123; these read MEAV…KQLR and VTHL…LGRP. Positions 13-25 are enriched in polar residues; it reads QVRSASRNQQRSG. Residues 26–38 show a composition bias toward basic and acidic residues; that stretch reads ESTKGRKWEKQLR. Positions 106-115 are enriched in polar residues; that stretch reads RNSQGRSQGT.

The polypeptide is Putative trans-acting factor (trans-acting factor) (Avian leukosis virus subgroup A (isolate RSA) (ALV-A RSA)).